The chain runs to 238 residues: Thiamine import ATP-binding protein ThiQ (238 aa).

The ABC transporter domain maps to 1-234 (MSSTALAVKG…RDIAAINRFL (234 aa)). 36-43 (GASGSGKS) contacts ATP.

Belongs to the ABC transporter superfamily. Thiamine importer (TC 3.A.1.19.1) family. The complex is composed of two ATP-binding proteins (ThiQ), two transmembrane proteins (ThiP) and a solute-binding protein (ThiB).

Its subcellular location is the cell inner membrane. The catalysed reaction is thiamine(out) + ATP + H2O = thiamine(in) + ADP + phosphate + H(+). In terms of biological role, part of the ABC transporter complex ThiBPQ involved in thiamine import. Responsible for energy coupling to the transport system. This Rhizobium meliloti (strain 1021) (Ensifer meliloti) protein is Thiamine import ATP-binding protein ThiQ.